The chain runs to 318 residues: uncharacterized protein (318 aa).

Positions 67–157 form a coiled coil; sequence LAFDELEKEK…SLKAIQTSQE (91 aa). Residues 172–318 are disordered; the sequence is ESTNKVEKNA…KGFFARLFNL (147 aa). 2 stretches are compositionally biased toward basic and acidic residues: residues 175–193 and 219–236; these read NKVEKNAVTEDKADSKDSK and KVDKEDQISATEAIEKAS. Polar residues predominate over residues 237–248; the sequence is VEQSKNENAAET. Composition is skewed to basic and acidic residues over residues 249–274 and 300–310; these read SNKEATVDADAQHDAEQQVAEAHAEA and SEPKPQEEKKG.

This is an uncharacterized protein from Staphylococcus aureus (strain Mu50 / ATCC 700699).